Reading from the N-terminus, the 356-residue chain is Glutamine synthetase cytosolic isozyme 1-1 (356 aa).

The residue at position 2 (Ser2) is an N-acetylserine. Phosphoserine is present on residues Ser2 and Ser48. The 81-residue stretch at 19–99 (IIAEYIWVGG…VMCDAYTPAG (81 aa)) folds into the GS beta-grasp domain. Residues 36 to 62 (KARTLPGPVTDPSQLPKWNYDGSSTGQ) form a disordered region. The GS catalytic domain maps to 106 to 356 (KRHAAAKVFS…IAETTILWNP (251 aa)).

The protein belongs to the glutamine synthetase family. In terms of assembly, homooctamer. Interacts with CRK3 and GRF3. Phosphorylated by CRK3. Expressed in root tips, root hairs and epidermis. Ubiquitously expressed with higher levels in siliques and roots.

The protein localises to the cytoplasm. The enzyme catalyses L-glutamate + NH4(+) + ATP = L-glutamine + ADP + phosphate + H(+). Functionally, high-affinity glutamine synthetase which catalyzes the synthesis of glutamine from ammonium and glutamate. May contribute to the homeostatic control of glutamine synthesis in roots. The sequence is that of Glutamine synthetase cytosolic isozyme 1-1 (GLN1-1) from Arabidopsis thaliana (Mouse-ear cress).